Here is a 344-residue protein sequence, read N- to C-terminus: Phenylalanine--tRNA ligase alpha subunit (344 aa).

Glutamate 256 is a Mg(2+) binding site.

The protein belongs to the class-II aminoacyl-tRNA synthetase family. Phe-tRNA synthetase alpha subunit type 1 subfamily. In terms of assembly, tetramer of two alpha and two beta subunits. It depends on Mg(2+) as a cofactor.

It localises to the cytoplasm. The catalysed reaction is tRNA(Phe) + L-phenylalanine + ATP = L-phenylalanyl-tRNA(Phe) + AMP + diphosphate + H(+). This chain is Phenylalanine--tRNA ligase alpha subunit, found in Bacillus pumilus (strain SAFR-032).